Consider the following 241-residue polypeptide: Platelet-derived growth factor subunit B (241 aa).

A signal peptide spans 1 to 20 (MNRCWALFLPLCCYLRLVSA). The propeptide at 21–81 (EGDPIPEELY…ELESSSRGRR (61 aa)) is removed in mature form. Residue N63 is glycosylated (N-linked (GlcNAc...) asparagine). Disulfide bonds link C97-C141, C130-C178, and C134-C180. Residues 191 to 241 (RSPGTSREQRAKTPQARVTIRTVRIRRPPKGKHRKFKHTHDKAALKETLGA) constitute a propeptide, removed in mature form. The segment covering 217-230 (RPPKGKHRKFKHTH) has biased composition (basic residues). Residues 217–241 (RPPKGKHRKFKHTHDKAALKETLGA) are disordered.

This sequence belongs to the PDGF/VEGF growth factor family. Antiparallel homodimer; disulfide-linked. Antiparallel heterodimer with PDGFA; disulfide-linked. The PDGFB homodimer interacts with PDGFRA and PDGFRB homodimers, and with heterodimers formed by PDGFRA and PDGFRB. The heterodimer composed of PDGFA and PDGFB interacts with PDGFRB homodimers, and with heterodimers formed by PDGFRA and PDGFRB. Interacts with XLKD1. Interacts with LRP1. Interacts with SORL1 (via the N-terminal ectodomain). Interacts with CD82; this interaction inhibits PDGFB-mediated signaling pathway. Localized to vascular smooth muscle cells. Also weakly expressed by cortical interstitial cells but absent in tubules. Up-regulated in areas of renal fibrosis. In mice with unilateral ureteral obstruction, an increased expression in interstitial cells and in some tubules observed after day 4.

The protein localises to the secreted. In terms of biological role, growth factor that plays an essential role in the regulation of embryonic development, cell proliferation, cell migration, survival and chemotaxis. Potent mitogen for cells of mesenchymal origin. Required for normal proliferation and recruitment of pericytes and vascular smooth muscle cells in the central nervous system, skin, lung, heart and placenta. Required for normal blood vessel development, and for normal development of kidney glomeruli. Plays an important role in wound healing. Signaling is modulated by the formation of heterodimers with PDGFA. In Mus musculus (Mouse), this protein is Platelet-derived growth factor subunit B (Pdgfb).